Here is a 1691-residue protein sequence, read N- to C-terminus: MNTKILLSLPWPKLMDPYMLLGFYYGLLTTLPVGPSQILCVRSFLLGGNLSGLISISGSVLAQLITASSIYCSPIYLLLLRPHLLTIVAIPYTLLFCLVIKDFPNYQILRPVTSLRDSRVARLFLISFFFQILNPIMLPNSVLTRLIYLYFFRYSTNTVFMVSTFMGWLTGQAAFNFFSRLLLSRVKGDSPILYLVAKRFIYATFSIVSISYAVAYLGRAPVSFWTKKFMNESHDREMNLWEIAEYSDLLWWFFKPWPTSFFDPSRANRSNRFVKNRRFHMNNTFYKGRTSTYFFEKCLTDGKERLSFLALPSLSIFGKEMYQSMAKSRRSFGIRLSYQNWVSKKLAKTKFFEKELTDQIKLLDTGSSFSKTMSRKTRLMGGKRRRIPRTYDPFVNNFRIRIPVSQTFLLEDDLGLSLWEWDKLATERKNRKAKKTVRINAIKDKIFTKDRRWKHGYGNPLPWEPLPSRSKRMFYFIFENRALYDYDLQNILKKIKSSPTLDVTWKEIMDLDYEDHILFLTYLEVGCCHRFGWISPLKAFLRKSSKSLSNVERRIRRLNKIGNLSMDLARYTILYFENNFDIPGGDGDFRYRKLRNVGITFAKGKPRSERLMKRYAKVSDFRRKFLKGSMRSRRRKTLLWKALQEKIRSSFFLRSAERTILFQSLIERLTTSSREEKFSELEKDTDYEFQKQLLDISLSAKRSLIGESKLTRSAIAARSDIGPIHNGRGYMLVFQSRFRKFIKLPVLIVLKNIGRILLRQNSEWNKDWTGWKKEIHINCTFDGEDFSQDELPPRWLREGIQIKIVYPFQLKPWHTDGNEKQHTLQRKHKEIGSKSRELKSKRKLKQKKHKFTYLTVLGYQTDIPFGTIQKKTSFWKPVRRKLIRICKRSLPRQIKQAYQFIHSRFEKVSKLNSTPSKKLNLISNLRQGGKLLSDYSLDEKSWMKTSSTNYVNEKTKPNCNVISNSERFIAIGGEMSPANVTRKQLVTRDQVEREFLMSIVAVDSKNLLDEKIDDPYSKITSKDLETGDTTSGDINLVNSTKFERKQLVDSEEAGLSLYLLVRELIETFVSVLINLPFTINRIFVHYFTEFLALYTKLAGILDNINEGSNLSTRSKSLQFDLPSQTCIYIDMWNIGMRGSLNLDLLVNDKRSSSNCGVKNRQSGIYVETDGVSNLYQPKMYEKQTPVHYNLIATKFLSPEIRNNHVNDLTMCFDTETGKTDEEFFDEKVARSIENWGFLNKSCKLDEINWNEWLYSLSRYNLPLTAWRNIAPRKWKVCLSELSSIETNTITELKDQVSQNKLHSYYSIYTKKSFLRNKISNFSKLRKHRNLLQNLTDSVQNGDVENLSVQRDIMEQRFHCKSCIQKSSRGGRNRISKFVHFLSSNVESKNNLNLQIDLLSWLDPDIAKTKIFLKKKKKAKQLKNPLLRNHYRYRYVLDISGRFQKVLNQLNDLTLDEREDADYIFRWKFKFETELEKFRNLISLTRMLGDDQDLITLCTNIEVNSDLLNLQFNAKTKRDMFHNLSVVSAHRLRLVFDDQDLLYKIINPLLKFKGRLRGIFRRRLYRNVYNGSYISNLSHILTERNCKQSCLYNIDDLLSPRRRREFRFLYCLLSPKIEYSQYISRIKKIDNAEKKQTLYHLPRPIRIQKIKRFLWPSHRLEEAACTGRSCVGVMTGSRFVTLRIRMYPIPLN.

6 helical membrane-spanning segments follow: residues 19–39, 60–80, 84–104, 123–143, 158–178, and 200–220; these read MLLGFYYGLLTTLPVGPSQIL, VLAQLITASSIYCSPIYLLLL, LLTIVAIPYTLLFCLVIKDFP, LFLISFFFQILNPIMLPNSVL, TVFMVSTFMGWLTGQAAFNFF, and FIYATFSIVSISYAVAYLGRA. Residues 819-839 are disordered; sequence EKQHTLQRKHKEIGSKSRELK.

The protein belongs to the TIC214 family. In terms of assembly, part of the Tic complex.

It localises to the plastid. Its subcellular location is the chloroplast inner membrane. Involved in protein precursor import into chloroplasts. May be part of an intermediate translocation complex acting as a protein-conducting channel at the inner envelope. The sequence is that of Protein TIC 214 from Adiantum capillus-veneris (Maidenhair fern).